A 458-amino-acid polypeptide reads, in one-letter code: Transmembrane protein 135 (458 aa).

Transmembrane regions (helical) follow at residues 68 to 88 (ILQS…FFCI), 96 to 116 (FYLW…AILV), 149 to 169 (TLRN…MFFF), 298 to 318 (FQLG…SCFL), 331 to 351 (IIAG…TISM), and 380 to 400 (IIYS…VQTL).

It belongs to the TMEM135 family.

The protein resides in the mitochondrion membrane. Its subcellular location is the peroxisome membrane. Its function is as follows. Involved in mitochondrial metabolism by regulating the balance between mitochondrial fusion and fission. May act as a regulator of mitochondrial fission that promotes DNM1L-dependent fission through activation of DNM1L. May be involved in peroxisome organization. The chain is Transmembrane protein 135 from Bos taurus (Bovine).